The chain runs to 804 residues: Leucine--tRNA ligase (804 aa).

The 'HIGH' region motif lies at 40–51; sequence PYPSGAGLHVGH. The short motif at 576 to 580 is the 'KMSKS' region element; that stretch reads KMSKS. Lys579 is an ATP binding site.

This sequence belongs to the class-I aminoacyl-tRNA synthetase family.

The protein resides in the cytoplasm. It catalyses the reaction tRNA(Leu) + L-leucine + ATP = L-leucyl-tRNA(Leu) + AMP + diphosphate. The chain is Leucine--tRNA ligase from Bacillus pumilus (strain SAFR-032).